A 287-amino-acid polypeptide reads, in one-letter code: Undecaprenyl-diphosphatase (287 aa).

7 helical membrane passes run L6 to V26, S45 to F65, A85 to I105, V111 to W131, A204 to L224, A238 to L258, and T265 to M285.

The protein belongs to the UppP family.

It localises to the cell inner membrane. It catalyses the reaction di-trans,octa-cis-undecaprenyl diphosphate + H2O = di-trans,octa-cis-undecaprenyl phosphate + phosphate + H(+). Catalyzes the dephosphorylation of undecaprenyl diphosphate (UPP). Confers resistance to bacitracin. In Bordetella petrii (strain ATCC BAA-461 / DSM 12804 / CCUG 43448), this protein is Undecaprenyl-diphosphatase.